A 300-amino-acid chain; its full sequence is N-acetylmuramic acid 6-phosphate etherase (300 aa).

In terms of domain architecture, SIS spans 57-220 (IAVAFQSGGR…TTGAMIRTGK (164 aa)). The active-site Proton donor is Glu85. Glu116 is an active-site residue.

Belongs to the GCKR-like family. MurNAc-6-P etherase subfamily. Homodimer.

The catalysed reaction is N-acetyl-D-muramate 6-phosphate + H2O = N-acetyl-D-glucosamine 6-phosphate + (R)-lactate. It functions in the pathway amino-sugar metabolism; 1,6-anhydro-N-acetylmuramate degradation. Its pathway is amino-sugar metabolism; N-acetylmuramate degradation. It participates in cell wall biogenesis; peptidoglycan recycling. Functionally, specifically catalyzes the cleavage of the D-lactyl ether substituent of MurNAc 6-phosphate, producing GlcNAc 6-phosphate and D-lactate. Together with AnmK, is also required for the utilization of anhydro-N-acetylmuramic acid (anhMurNAc) either imported from the medium or derived from its own cell wall murein, and thus plays a role in cell wall recycling. The chain is N-acetylmuramic acid 6-phosphate etherase from Aliivibrio fischeri (strain MJ11) (Vibrio fischeri).